The primary structure comprises 1186 residues: Tricalbin-1 (1186 aa).

Positions 1-50 (MAKEDTGVTAPKKPETAQVANINGIDKLEPPKTKEETESSKSVSSEKAAH) are disordered. The Cytoplasmic portion of the chain corresponds to 1–106 (MAKEDTGVTA…NIIPDSLYGD (106 aa)). Basic and acidic residues predominate over residues 26–39 (DKLEPPKTKEETES). The chain crosses the membrane as a helical span at residues 107-127 (WYHSVAIFFIGGVASFALGHY). A topological domain (extracellular) is located at residue Lys-128. A helical membrane pass occupies residues 129–149 (FSMGSAFFVIVITSLLYRTSA). At 150-1186 (KKYRGSIREL…HEMGEEETKF (1037 aa)) the chain is on the cytoplasmic side. Residues 172–375 (DYESLEWLNA…PPFSLQLNIP (204 aa)) form the SMP-LTD domain. C2 domains are found at residues 366 to 487 (PPFS…RNLK), 512 to 636 (EKKL…IKIT), and 640 to 757 (RPVR…DKYE). The stretch at 795 to 822 (LEEIQDLDKVNKKKKALELRKSAIDEKK) forms a coiled coil. Residues 976–1094 (PIDTKQLPAN…KVEGTTELDV (119 aa)) form the C2 4 domain. A Phosphoserine modification is found at Ser-1000. 6 residues coordinate Ca(2+): Asp-1008, Asp-1014, Asp-1064, Asp-1066, Ser-1069, and Asp-1072.

The protein belongs to the tricalbin family. In terms of assembly, interacts with TCB2 via its C-terminal domain. Ca(2+) is required as a cofactor.

The protein localises to the cell membrane. The protein resides in the endoplasmic reticulum membrane. Its function is as follows. May play a role in membrane trafficking. The protein is Tricalbin-1 (TCB1) of Saccharomyces cerevisiae (strain ATCC 204508 / S288c) (Baker's yeast).